Here is a 203-residue protein sequence, read N- to C-terminus: Membrane-spanning 4-domains subfamily A member 13 (203 aa).

A run of 4 helical transmembrane segments spans residues 15–35, 56–76, 84–104, and 141–161; these read VLGV…YFLL, MGTS…VKAA, ILCT…AASL, and FAIA…SSIV.

It belongs to the MS4A family.

The protein localises to the membrane. Functionally, may be involved in signal transduction as a component of a multimeric receptor complex. The protein is Membrane-spanning 4-domains subfamily A member 13 (Ms4a13) of Mus musculus (Mouse).